Consider the following 445-residue polypeptide: Serine protease inhibitor A3F (445 aa).

4 N-linked (GlcNAc...) asparagine glycosylation sites follow: asparagine 28, asparagine 94, asparagine 174, and asparagine 259. The tract at residues 357-382 (GTEAAAGTGYQNLQCCQGVIYSMKIY) is RCL.

This sequence belongs to the serpin family.

The polypeptide is Serine protease inhibitor A3F (Serpina3f) (Mus musculus (Mouse)).